The chain runs to 132 residues: Transcription antitermination protein NusB (132 aa).

The protein belongs to the NusB family.

In terms of biological role, involved in transcription antitermination. Required for transcription of ribosomal RNA (rRNA) genes. Binds specifically to the boxA antiterminator sequence of the ribosomal RNA (rrn) operons. In Lachnoclostridium phytofermentans (strain ATCC 700394 / DSM 18823 / ISDg) (Clostridium phytofermentans), this protein is Transcription antitermination protein NusB.